A 184-amino-acid polypeptide reads, in one-letter code: GMP synthase [glutamine-hydrolyzing] subunit A (184 aa).

Residues 3–184 enclose the Glutamine amidotransferase type-1 domain; it reads PICVVNNYGQ…YENFDAICTE (182 aa). Cys75 serves as the catalytic Nucleophile. Catalysis depends on residues His162 and Glu164.

As to quaternary structure, heterodimer composed of a glutamine amidotransferase subunit (A) and a GMP-binding subunit (B).

It carries out the reaction XMP + L-glutamine + ATP + H2O = GMP + L-glutamate + AMP + diphosphate + 2 H(+). It participates in purine metabolism; GMP biosynthesis; GMP from XMP (L-Gln route): step 1/1. Functionally, catalyzes the synthesis of GMP from XMP. The protein is GMP synthase [glutamine-hydrolyzing] subunit A of Methanoregula boonei (strain DSM 21154 / JCM 14090 / 6A8).